The sequence spans 280 residues: Polyamine aminopropyltransferase 1 (280 aa).

A PABS domain is found at 3–237 (DIVFIERDPY…YWWTFSIASK (235 aa)). Q33 is an S-methyl-5'-thioadenosine binding site. Spermidine-binding residues include H64 and D88. S-methyl-5'-thioadenosine-binding positions include D108 and 139 to 140 (DG). The active-site Proton acceptor is the D157. 157 to 160 (DSTD) is a spermidine binding site.

It belongs to the spermidine/spermine synthase family. In terms of assembly, homodimer or homotetramer.

Its subcellular location is the cytoplasm. It catalyses the reaction S-adenosyl 3-(methylsulfanyl)propylamine + putrescine = S-methyl-5'-thioadenosine + spermidine + H(+). Its pathway is amine and polyamine biosynthesis; spermidine biosynthesis; spermidine from putrescine: step 1/1. Catalyzes the irreversible transfer of a propylamine group from the amino donor S-adenosylmethioninamine (decarboxy-AdoMet) to putrescine (1,4-diaminobutane) to yield spermidine. The sequence is that of Polyamine aminopropyltransferase 1 from Aquifex aeolicus (strain VF5).